Reading from the N-terminus, the 1273-residue chain is DNA-directed RNA polymerase subunit beta (1273 aa).

The protein belongs to the RNA polymerase beta chain family. As to quaternary structure, the RNAP catalytic core consists of 2 alpha, 1 beta, 1 beta' and 1 omega subunit. When a sigma factor is associated with the core the holoenzyme is formed, which can initiate transcription.

The enzyme catalyses RNA(n) + a ribonucleoside 5'-triphosphate = RNA(n+1) + diphosphate. DNA-dependent RNA polymerase catalyzes the transcription of DNA into RNA using the four ribonucleoside triphosphates as substrates. This chain is DNA-directed RNA polymerase subunit beta, found in Aster yellows witches'-broom phytoplasma (strain AYWB).